The following is a 348-amino-acid chain: Protein RecA (348 aa).

Residue 66–73 participates in ATP binding; it reads GPESSGKT.

It belongs to the RecA family.

The protein localises to the cytoplasm. Functionally, can catalyze the hydrolysis of ATP in the presence of single-stranded DNA, the ATP-dependent uptake of single-stranded DNA by duplex DNA, and the ATP-dependent hybridization of homologous single-stranded DNAs. It interacts with LexA causing its activation and leading to its autocatalytic cleavage. The protein is Protein RecA of Legionella pneumophila (strain Lens).